A 195-amino-acid polypeptide reads, in one-letter code: Xanthine phosphoribosyltransferase (195 aa).

Xanthine-binding residues include Leu20 and Asn27. 128 to 132 (ANGQA) provides a ligand contact to 5-phospho-alpha-D-ribose 1-diphosphate. Lys156 serves as a coordination point for xanthine.

It belongs to the purine/pyrimidine phosphoribosyltransferase family. Xpt subfamily. Homodimer.

The protein resides in the cytoplasm. It carries out the reaction XMP + diphosphate = xanthine + 5-phospho-alpha-D-ribose 1-diphosphate. It functions in the pathway purine metabolism; XMP biosynthesis via salvage pathway; XMP from xanthine: step 1/1. Its function is as follows. Converts the preformed base xanthine, a product of nucleic acid breakdown, to xanthosine 5'-monophosphate (XMP), so it can be reused for RNA or DNA synthesis. This chain is Xanthine phosphoribosyltransferase, found in Limosilactobacillus fermentum (strain NBRC 3956 / LMG 18251) (Lactobacillus fermentum).